The following is a 62-amino-acid chain: MVCIHTENQNQGDFYPFVLLEISVLHESPLGHLRYRLTDVPPQPNSPGEIYCFYINCIMNRR.

It belongs to the ART2/RRT15 family.

In terms of biological role, involved in modulation of rDNA transcription. This is Regulator of rDNA transcription protein 15 (RRT15) from Saccharomyces cerevisiae (strain ATCC 204508 / S288c) (Baker's yeast).